The sequence spans 141 residues: Large ribosomal subunit protein uL11 (141 aa).

Belongs to the universal ribosomal protein uL11 family. Part of the ribosomal stalk of the 50S ribosomal subunit. Interacts with L10 and the large rRNA to form the base of the stalk. L10 forms an elongated spine to which L12 dimers bind in a sequential fashion forming a multimeric L10(L12)X complex. One or more lysine residues are methylated.

Forms part of the ribosomal stalk which helps the ribosome interact with GTP-bound translation factors. The protein is Large ribosomal subunit protein uL11 of Sulfurimonas denitrificans (strain ATCC 33889 / DSM 1251) (Thiomicrospira denitrificans (strain ATCC 33889 / DSM 1251)).